The primary structure comprises 38 residues: CHH precursor-related peptide (38 aa).

The tract at residues 18 to 38 (GALEPSTPLGDLSGSLGHPVE) is disordered.

Produced by the medulla terminalis X-organ in the eyestalks and transported to the sinus gland where it is stored and released.

The protein resides in the secreted. The protein is CHH precursor-related peptide of Cancer pagurus (Rock crab).